A 111-amino-acid polypeptide reads, in one-letter code: Prostatic steroid-binding protein C1 (111 aa).

Positions 1–23 (MSTIKLSLCLLIMLAVCCYEANA) are cleaved as a signal peptide.

The protein belongs to the secretoglobin family. Lipophilin subfamily. As to quaternary structure, prostatein is composed of three different peptides called C1, C2 and C3. These form covalent C1:C3 (F) and C2:C3 (S) heterodimers whose noncovalent association forms tetrameric (C1:C3/C3:C2) prostatein molecules.

The protein localises to the secreted. Its function is as follows. Part of prostatein which is the major secretory glycoprotein of ventral prostate gland. The polypeptide is Prostatic steroid-binding protein C1 (Psbpc1) (Rattus norvegicus (Rat)).